Here is a 781-residue protein sequence, read N- to C-terminus: N-acetylneuraminate (7)9-O-acetyltransferase (781 aa).

Residues 1-15 are Cytoplasmic-facing; the sequence is MAVLAYNLGKREINQ. A helical membrane pass occupies residues 16–36; that stretch reads YFSIKNAKLLAAAAVVLLTVF. The Lumenal segment spans residues 37–308; sequence HAASRHYGSS…SAPPLSVLQK (272 aa). Residue S94 is the Acyl-ester intermediate of the active site. N139, N185, and N239 each carry an N-linked (GlcNAc...) asparagine glycan. Catalysis depends on residues D264 and H267. A helical transmembrane segment spans residues 309 to 329; the sequence is LAAAVLLVSVVCFVLLGFSSH. The tract at residues 330–350 is disordered; that stretch reads RKSRPAPDVESGEEKKHPAAV. Residues 330–354 are Cytoplasmic-facing; the sequence is RKSRPAPDVESGEEKKHPAAVGQLN. A helical transmembrane segment spans residues 355–375; sequence PKGPLLAIGKMSLIMLYFYLC. Residues 376–386 lie on the Lumenal side of the membrane; it reads DRADIFMKEQK. Residues 387 to 407 form a helical membrane-spanning segment; sequence FYTHSAFFIPLIYIFVLGVFY. Residues 408–430 lie on the Cytoplasmic side of the membrane; the sequence is SENSKETKLLNREQTDEWKGWMQ. A helical membrane pass occupies residues 431–451; that stretch reads LVILIYHISGASAFIPVYMHV. R452 is a topological domain (lumenal). A helical membrane pass occupies residues 453 to 473; the sequence is VLVAAYLFQTGYGHFSFFWLK. The Cytoplasmic segment spans residues 474–477; that stretch reads GDFG. A helical membrane pass occupies residues 478-498; sequence LYRVCQVLFRLNFLVVVLCLV. At 499–504 the chain is on the lumenal side; the sequence is MDRPYQ. Residues 505–525 traverse the membrane as a helical segment; that stretch reads FYYFVPLVTFWFAVIYATMAL. The Cytoplasmic portion of the chain corresponds to 526 to 537; sequence WPQILQKQANGS. Residues 538–558 traverse the membrane as a helical segment; that stretch reads AFWNLALLLKLLGLLLFIGFF. At 559-595 the chain is on the lumenal side; it reads AYSQELFEGIFSVWPLSKLFELQGSIHEWWFRWKLDR. The helical transmembrane segment at 596-616 threads the bilayer; that stretch reads FAVVNGMLFAFIYLLLQKYQL. Residues 617-629 lie on the Cytoplasmic side of the membrane; the sequence is LSEGKGEPLFSNK. The chain crosses the membrane as a helical span at residues 630–650; the sequence is ISNCLLFVSVVSFMTYSIWAS. Over 651–660 the chain is Lumenal; sequence GCKNKSECNE. The N-linked (GlcNAc...) asparagine glycan is linked to N654. Residues 661–681 traverse the membrane as a helical segment; the sequence is MHPYISVILAFILIRNIPGYA. At 682 to 687 the chain is on the cytoplasmic side; it reads RSLYSS. Residues 688 to 708 traverse the membrane as a helical segment; it reads FFAWFGKISLELFICQYHIWL. Residues 709–714 lie on the Lumenal side of the membrane; sequence AADTKG. The helical transmembrane segment at 715–735 threads the bilayer; sequence ILVLIPGNPTLNIIVSTFIFV. At 736–756 the chain is on the cytoplasmic side; sequence CVAHEISQITNDLAQVAIPKE. The chain crosses the membrane as a helical span at residues 757–777; sequence SGPLLKRLLGAGVFLVLVLTL. The Lumenal segment spans residues 778 to 781; the sequence is SQKD.

It belongs to the PC-esterase family. CASD1 subfamily.

Its subcellular location is the golgi apparatus membrane. The catalysed reaction is CMP-N-acetyl-beta-neuraminate + acetyl-CoA = CMP-N-acetyl-9-O-acetyl-beta-neuraminate + CoA. The enzyme catalyses a ganglioside GD3 (d18:1(4E)) + acetyl-CoA = a ganglioside Ac-O-7-GD3(d18:1(4E)) + CoA. It carries out the reaction CMP-N-acetyl-beta-neuraminate + acetyl-CoA = CMP-N-acetyl-7-O-acetyl-beta-neuraminate + CoA. Its function is as follows. Key enzyme in the biosynthesis of O-acetylated (O-Ac) sialoglycans such as gangliosides O-AcGD3 and O-AcGD2, which affect various processes such as cell-cell interactions, host-pathogen recognition. Catalyzes the transfer of an acetyl group from a donor, the acetyl-coenzyme-A molecule (acetyl-CoA), to the C7/8/9 OH-position of a sialic acid residue. The primary site of O-acetyl group transfer on sialic acid seems to depend on cell type and can be C7, from which the O-acetyl group could subsequently migrate to the C8 and then to the C9 position, or at C9 with possibility of migrating to the C8 and then to the C7 position. Together with ST8SIA1 (GD3 synthase) it increases the levels of ganglioside Ac-O-7-GD3. Can transfer the acetyl group from acetyl-CoA to free sialate (N-acetylneuraminate, Neu5Ac) in vitro, but has preferred substrate specificity for CMP-activated sialate (CMP-Neu5Ac), resulting in the formation of 9-O-acetylated CMP-Neu5Ac (CMP-Neu5,9Ac2). CMP-Neu5,9Ac2 may be used by sialyltransferases as a sialate donor for glycoconjugate acceptors such as ganglioside GD3. O-acetylation at position C9 of ganglioside GD3 can counteract the pro-apoptotic effects of the ganglioside GD3 in tumor cells. This Danio rerio (Zebrafish) protein is N-acetylneuraminate (7)9-O-acetyltransferase.